The sequence spans 189 residues: Elongation factor P (189 aa).

This sequence belongs to the elongation factor P family.

Its subcellular location is the cytoplasm. The protein operates within protein biosynthesis; polypeptide chain elongation. Involved in peptide bond synthesis. Stimulates efficient translation and peptide-bond synthesis on native or reconstituted 70S ribosomes in vitro. Probably functions indirectly by altering the affinity of the ribosome for aminoacyl-tRNA, thus increasing their reactivity as acceptors for peptidyl transferase. This chain is Elongation factor P, found in Pseudomonas fluorescens (strain Pf0-1).